Here is a 546-residue protein sequence, read N- to C-terminus: Chaperonin GroEL (546 aa).

ATP-binding positions include 30 to 33 (TLGP), lysine 51, 87 to 91 (DGTTT), glycine 415, and aspartate 496. The tract at residues 526 to 546 (PEDKPAPAMPGGMGGMGGMDF) is disordered. The segment covering 536–546 (GGMGGMGGMDF) has biased composition (gly residues).

Belongs to the chaperonin (HSP60) family. Forms a cylinder of 14 subunits composed of two heptameric rings stacked back-to-back. Interacts with the co-chaperonin GroES.

It is found in the cytoplasm. The catalysed reaction is ATP + H2O + a folded polypeptide = ADP + phosphate + an unfolded polypeptide.. Together with its co-chaperonin GroES, plays an essential role in assisting protein folding. The GroEL-GroES system forms a nano-cage that allows encapsulation of the non-native substrate proteins and provides a physical environment optimized to promote and accelerate protein folding. This is Chaperonin GroEL from Zymomonas mobilis subsp. mobilis (strain ATCC 31821 / ZM4 / CP4).